The following is a 95-amino-acid chain: Cytosolic calcium-binding protein 3 (95 aa).

Tandem repeats lie at residues 30 to 35 (VEDAEK), 39 to 43 (DEEEK), 54 to 59 (VEEEKK), 67 to 71 (PEEKK), 75 to 79 (LEEKQ), and 90 to 94 (VEKAK). The interval 30–94 (VEDAEKTNED…AEEVAVEKAK (65 aa)) is 6 X 5 AA approximate repeats of V-E-E-K-K. Positions 54 to 95 (VEEEKKAEEVTETPEEKKTEALEEKQTEVAAAEEVAVEKAKE) are disordered. Residues 55 to 80 (EEEKKAEEVTETPEEKKTEALEEKQT) show a composition bias toward basic and acidic residues.

As to expression, low levels in roots (e.g. in cambium) and barely expressed in stems, shoots, flowers, siliques and leaves.

The protein resides in the cytoplasm. It is found in the cytosol. Functionally, binds calcium Ca(2+) and may act as a signal mediator to buffer Ca(2+). In Arabidopsis thaliana (Mouse-ear cress), this protein is Cytosolic calcium-binding protein 3.